Consider the following 257-residue polypeptide: Diphthine synthase (257 aa).

S-adenosyl-L-methionine-binding positions include Ile11, Asp89, Ile92, 117-118 (SV), Leu169, Leu210, and His235.

The protein belongs to the diphthine synthase family. As to quaternary structure, homodimer.

It catalyses the reaction 2-[(3S)-amino-3-carboxypropyl]-L-histidyl-[translation elongation factor 2] + 3 S-adenosyl-L-methionine = diphthine-[translation elongation factor 2] + 3 S-adenosyl-L-homocysteine + 3 H(+). It participates in protein modification; peptidyl-diphthamide biosynthesis. Functionally, S-adenosyl-L-methionine-dependent methyltransferase that catalyzes the trimethylation of the amino group of the modified target histidine residue in translation elongation factor 2 (EF-2), to form an intermediate called diphthine. The three successive methylation reactions represent the second step of diphthamide biosynthesis. The chain is Diphthine synthase from Saccharolobus islandicus (strain L.S.2.15 / Lassen #1) (Sulfolobus islandicus).